An 835-amino-acid polypeptide reads, in one-letter code: Microcephalin (835 aa).

Positions 1 to 93 (MAAPILKDVV…AHIDESLFPA (93 aa)) constitute a BRCT 1 domain. A phosphoserine mark is found at Ser-279, Ser-287, Ser-296, and Ser-333. 2 disordered regions span residues 313 to 381 (PDQK…RRSI) and 419 to 443 (DNLK…AQLS). The residue at position 335 (Thr-335) is a Phosphothreonine. The span at 343 to 361 (LLIHSRPRSSSVKRKRVSH) shows a compositional bias: basic residues. A compositionally biased stretch (polar residues) spans 434-443 (QLPSSPAQLS). Residue Ser-548 is modified to Phosphoserine. The tract at residues 555–584 (AVGLKSTQNKGTTSKISNSSEGEAQSEHEP) is disordered. Residues 559–577 (KSTQNKGTTSKISNSSEGE) are compositionally biased toward polar residues. BRCT domains are found at residues 640–730 (SGRG…PFEL) and 751–833 (YRGT…NYLL).

As to quaternary structure, interacts with CDC27 and maybe other components of the APC/C complex. Interacts with histone variant H2AX under DNA damage conditions. As to expression, expressed in fetal brain, liver and kidney.

It localises to the cytoplasm. Its subcellular location is the cytoskeleton. It is found in the microtubule organizing center. The protein localises to the centrosome. Implicated in chromosome condensation and DNA damage induced cellular responses. May play a role in neurogenesis and regulation of the size of the cerebral cortex. The protein is Microcephalin of Homo sapiens (Human).